Reading from the N-terminus, the 318-residue chain is NADH-ubiquinone oxidoreductase chain 1 (318 aa).

The next 8 membrane-spanning stretches (helical) occupy residues 2-22 (FLINVLTVTLPILLAVAFLTL), 69-89 (FLFTVAPILALTLALTVWAPL), 102-122 (LLFILAMSSLMVYSILWSGWA), 146-166 (MTTITLSMVLMNGSFTLTAFA), 171-191 (HLWLILPMWPLMMMWFTSTLA), 222-242 (LFFMAEYANIIMMNALTVILF), 253-273 (EISTINFVMKTIILTICFLWV), and 294-314 (LPLTLALCMWHISVLISLACI).

It belongs to the complex I subunit 1 family.

The protein localises to the mitochondrion inner membrane. It carries out the reaction a ubiquinone + NADH + 5 H(+)(in) = a ubiquinol + NAD(+) + 4 H(+)(out). Functionally, core subunit of the mitochondrial membrane respiratory chain NADH dehydrogenase (Complex I) that is believed to belong to the minimal assembly required for catalysis. Complex I functions in the transfer of electrons from NADH to the respiratory chain. The immediate electron acceptor for the enzyme is believed to be ubiquinone. The polypeptide is NADH-ubiquinone oxidoreductase chain 1 (MT-ND1) (Loxodonta africana (African elephant)).